Here is a 583-residue protein sequence, read N- to C-terminus: Sensor protein SrrB (583 aa).

The Cytoplasmic portion of the chain corresponds to 1–11 (MMSRLNSVVIK). A helical transmembrane segment spans residues 12 to 32 (LWLTIILIVTTVLILLSIALI). Residues 33–174 (TFMQYYFTQE…SIEDTNNAIT (142 aa)) are Extracellular-facing. Residues 175-195 (IITIITAVIFLTITTVFAFFL) form a helical membrane-spanning segment. Residues 196-583 (SSRITKPLRR…TFIIKLPKPE (388 aa)) are Cytoplasmic-facing. Residues 197–249 (SRITKPLRRLRDQATRVSEGDYSYKPSVTTKDEIGQLSQAFNQMSTEIEEHVD) enclose the HAMP domain. Positions 366 to 583 (NVSHELRTPI…TFIIKLPKPE (218 aa)) constitute a Histidine kinase domain. The residue at position 369 (His-369) is a Phosphohistidine; by autocatalysis.

Its subcellular location is the cell membrane. It catalyses the reaction ATP + protein L-histidine = ADP + protein N-phospho-L-histidine.. Functionally, member of the two-component regulatory system SrrA/SrrB, which is involved in the global regulation of staphylococcal virulence factors in response to environmental oxygen levels as well as biofilm formation. Also plays an essential role in host-derived nitric oxide resistance by regulating hmp/flavohemoglobin, an enzyme that detoxifies nitric oxide by converting it to nitrate. Functions as a sensor protein kinase which is autophosphorylated at a histidine residue and transfers its phosphate group to SrrA. In turn, SrrA binds to the upstream promoter regions of the target genes to positively and negatively regulate their expression. The chain is Sensor protein SrrB (srrB) from Staphylococcus aureus (strain Mu50 / ATCC 700699).